The primary structure comprises 173 residues: Translation initiation factor IF-3 (173 aa).

Belongs to the IF-3 family. In terms of assembly, monomer.

It is found in the cytoplasm. IF-3 binds to the 30S ribosomal subunit and shifts the equilibrium between 70S ribosomes and their 50S and 30S subunits in favor of the free subunits, thus enhancing the availability of 30S subunits on which protein synthesis initiation begins. The sequence is that of Translation initiation factor IF-3 from Methylobacterium radiotolerans (strain ATCC 27329 / DSM 1819 / JCM 2831 / NBRC 15690 / NCIMB 10815 / 0-1).